The following is a 382-amino-acid chain: Serine protease 43 (382 aa).

Positions 1–27 are cleaved as a signal peptide; that stretch reads MGGFCGADRGGFLALLVWLQLLQPLFS. The tract at residues 30–97 is disordered; that stretch reads YKPREDSGVM…SGTTTKITLE (68 aa). 2 stretches are compositionally biased toward polar residues: residues 56–68 and 85–95; these read AQQSRLKSLSISH and GSPSGTTTKIT. The region spanning 119-355 is the Peptidase S1 domain; sequence VDPGSLSAGR…YNEWVSYVLS (237 aa). Cys144 and Cys160 form a disulfide bridge. Catalysis depends on charge relay system residues His159 and Asp205. Intrachain disulfides connect Cys239/Cys313, Cys272/Cys293, and Cys303/Cys331. The active-site Charge relay system is the Ser307. The helical transmembrane segment at 362–382 threads the bilayer; it reads PMGVLVLYLSLVFPLALLVAL.

The protein belongs to the peptidase S1 family. Testis-specific. Expressed in germ cells at the stages from late pachytene spermatocytes to spermatids.

The protein resides in the cell membrane. In terms of biological role, plays a role in spermatogenesis. Involved in germ cell survival during meiosis. Lacks protease activity in vitro. In Mus musculus (Mouse), this protein is Serine protease 43.